Here is a 359-residue protein sequence, read N- to C-terminus: Endoglucanase 1 (359 aa).

2 disordered regions span residues 1–26 (MENP…RGGR) and 47–72 (TGAS…DAGT). The segment covering 13-24 (LRRRRSERRARG) has biased composition (basic residues). The segment covering 60–72 (APSADSGTADAGT) has biased composition (low complexity). Residue Asp154 is part of the active site. Residues Cys155 and Cys199 are joined by a disulfide bond. Asp192 functions as the Proton donor in the catalytic mechanism. Asp339 (nucleophile) is an active-site residue.

It belongs to the glycosyl hydrolase 6 (cellulase B) family.

The enzyme catalyses Endohydrolysis of (1-&gt;4)-beta-D-glucosidic linkages in cellulose, lichenin and cereal beta-D-glucans.. In terms of biological role, CMCase I preferentially hydrolyzes carboxymethyl cellulose (CMC). This Streptomyces sp. (strain KSM-9) protein is Endoglucanase 1 (casA).